The chain runs to 77 residues: U8-lycotoxin-Ls1r (77 aa).

The N-terminal stretch at 1–20 (MKLIIFTGLVLFAIVSLIEA) is a signal peptide. Residues 21–26 (QAENEK) constitute a propeptide that is removed on maturation.

Belongs to the neurotoxin 19 (CSTX) family. 08 (U8-Lctx) subfamily. In terms of processing, contains 4 disulfide bonds. In terms of tissue distribution, expressed by the venom gland.

The protein resides in the secreted. This chain is U8-lycotoxin-Ls1r, found in Lycosa singoriensis (Wolf spider).